Here is a 225-residue protein sequence, read N- to C-terminus: 7-cyano-7-deazaguanine synthase (225 aa).

An ATP-binding site is contributed by Leu10–Ala20. The Zn(2+) site is built by Cys191, Cys199, Cys202, and Cys205.

It belongs to the QueC family. The cofactor is Zn(2+).

The catalysed reaction is 7-carboxy-7-deazaguanine + NH4(+) + ATP = 7-cyano-7-deazaguanine + ADP + phosphate + H2O + H(+). It functions in the pathway purine metabolism; 7-cyano-7-deazaguanine biosynthesis. Its function is as follows. Catalyzes the ATP-dependent conversion of 7-carboxy-7-deazaguanine (CDG) to 7-cyano-7-deazaguanine (preQ(0)). This Prochlorococcus marinus (strain NATL1A) protein is 7-cyano-7-deazaguanine synthase.